A 56-amino-acid chain; its full sequence is uncharacterized protein (56 aa).

A helical membrane pass occupies residues 2 to 22; it reads ILYIIVAISILLNIILGIKVI.

The protein localises to the membrane. This is an uncharacterized protein from Methanocaldococcus jannaschii (strain ATCC 43067 / DSM 2661 / JAL-1 / JCM 10045 / NBRC 100440) (Methanococcus jannaschii).